Reading from the N-terminus, the 323-residue chain is Transcription factor JunD (323 aa).

2 disordered regions span residues 138 to 173 (QNQLGGGGGPNGGAAAAGGGGGGGGGGGGELPAPGL) and 197 to 221 (PFAAPPPRLPPPPPPPLKDEPQIVP). Residues 141–167 (LGGGGGPNGGAAAAGGGGGGGGGGGGE) show a composition bias toward gly residues. Over residues 198-212 (FAAPPPRLPPPPPPP) the composition is skewed to pro residues. Residues 242 to 269 (RIKAERKRLRNRIAASKCRKRKLERISR) are basic motif. The 64-residue stretch at 242-305 (RIKAERKRLR…AQLKQKVLSH (64 aa)) folds into the bZIP domain. A leucine-zipper region spans residues 270–298 (LEEKVKSLKSQNTELASTASLLREQVAQL).

This sequence belongs to the bZIP family. Jun subfamily. As to quaternary structure, binds DNA as a dimer.

It is found in the nucleus. This is Transcription factor JunD (JUND) from Gallus gallus (Chicken).